The primary structure comprises 237 residues: uncharacterized protein (237 aa).

In terms of domain architecture, GP-PDE spans 4–237 (QFLIAHRGYS…VKFQIAAQLY (234 aa)).

The protein to glycerophosphoryl diester phosphodiesterases (EC 3.1.4.46). This sequence to M.genitalium MG293.

This is an uncharacterized protein from Mycoplasma pneumoniae (strain ATCC 29342 / M129 / Subtype 1) (Mycoplasmoides pneumoniae).